Consider the following 582-residue polypeptide: ATP-dependent lipid A-core flippase (582 aa).

Helical transmembrane passes span L16–L36, L64–I84, I153–V173, P253–P273, and V275–M295. The ABC transmembrane type-1 domain maps to I28–R310. An ABC transporter domain is found at L342–M578. G376 to S383 provides a ligand contact to ATP.

Belongs to the ABC transporter superfamily. Lipid exporter (TC 3.A.1.106) family. Homodimer.

It is found in the cell inner membrane. The enzyme catalyses ATP + H2O + lipid A-core oligosaccharideSide 1 = ADP + phosphate + lipid A-core oligosaccharideSide 2.. Involved in lipopolysaccharide (LPS) biosynthesis. Translocates lipid A-core from the inner to the outer leaflet of the inner membrane. Transmembrane domains (TMD) form a pore in the inner membrane and the ATP-binding domain (NBD) is responsible for energy generation. This Salmonella paratyphi A (strain ATCC 9150 / SARB42) protein is ATP-dependent lipid A-core flippase.